A 458-amino-acid polypeptide reads, in one-letter code: Argininosuccinate lyase (458 aa).

It belongs to the lyase 1 family. Argininosuccinate lyase subfamily.

Its subcellular location is the cytoplasm. The enzyme catalyses 2-(N(omega)-L-arginino)succinate = fumarate + L-arginine. It participates in amino-acid biosynthesis; L-arginine biosynthesis; L-arginine from L-ornithine and carbamoyl phosphate: step 3/3. The polypeptide is Argininosuccinate lyase (Pelobacter propionicus (strain DSM 2379 / NBRC 103807 / OttBd1)).